A 631-amino-acid chain; its full sequence is BTB/POZ domain-containing protein At1g67900 (631 aa).

A BTB domain is found at 28-93 (SDFTIEVSGS…CYGITITISA (66 aa)). Positions 200–509 (GWWAEDIAEL…VQVLFYEQAR (310 aa)) constitute an NPH3 domain. The tract at residues 361–399 (QTSPPTSPLRGKKGMMDRRRRSRSAENIDLEFQESRRSS) is disordered. Residues 370-382 (RGKKGMMDRRRRS) show a composition bias toward basic residues. Tyrosine 450 carries the post-translational modification Phosphotyrosine. Position 567 is a phosphoserine (serine 567).

This sequence belongs to the NPH3 family.

Its pathway is protein modification; protein ubiquitination. May act as a substrate-specific adapter of an E3 ubiquitin-protein ligase complex (CUL3-RBX1-BTB) which mediates the ubiquitination and subsequent proteasomal degradation of target proteins. In Arabidopsis thaliana (Mouse-ear cress), this protein is BTB/POZ domain-containing protein At1g67900.